The chain runs to 172 residues: Ribosome maturation factor RimM (172 aa).

One can recognise a PRC barrel domain in the interval Pro96–Leu169.

This sequence belongs to the RimM family. As to quaternary structure, binds ribosomal protein uS19.

The protein localises to the cytoplasm. In terms of biological role, an accessory protein needed during the final step in the assembly of 30S ribosomal subunit, possibly for assembly of the head region. Essential for efficient processing of 16S rRNA. May be needed both before and after RbfA during the maturation of 16S rRNA. It has affinity for free ribosomal 30S subunits but not for 70S ribosomes. The sequence is that of Ribosome maturation factor RimM from Mycolicibacterium vanbaalenii (strain DSM 7251 / JCM 13017 / BCRC 16820 / KCTC 9966 / NRRL B-24157 / PYR-1) (Mycobacterium vanbaalenii).